Reading from the N-terminus, the 455-residue chain is Bifunctional protein GlmU (455 aa).

The segment at 1-228 (MNNTLTTIIL…EFEIEGVNNR (228 aa)) is pyrophosphorylase. UDP-N-acetyl-alpha-D-glucosamine is bound by residues 10–13 (LAAG), Lys-24, Gln-75, 80–81 (GT), 102–104 (YGD), Gly-138, Glu-153, Asn-168, and Asn-226. Mg(2+) is bound at residue Asp-104. Position 226 (Asn-226) interacts with Mg(2+). The tract at residues 229–249 (QQLAQLERKWQAKLVEDLQVQ) is linker. Positions 250–455 (GVQFADPNRV…DNYQRPEKKK (206 aa)) are N-acetyltransferase. UDP-N-acetyl-alpha-D-glucosamine is bound by residues Arg-332 and Lys-350. Catalysis depends on His-362, which acts as the Proton acceptor. UDP-N-acetyl-alpha-D-glucosamine is bound by residues Tyr-365 and Asn-376. Residues Ala-379, 385–386 (NY), Ala-422, and Arg-439 each bind acetyl-CoA.

In the N-terminal section; belongs to the N-acetylglucosamine-1-phosphate uridyltransferase family. The protein in the C-terminal section; belongs to the transferase hexapeptide repeat family. Homotrimer. Requires Mg(2+) as cofactor.

It is found in the cytoplasm. It catalyses the reaction alpha-D-glucosamine 1-phosphate + acetyl-CoA = N-acetyl-alpha-D-glucosamine 1-phosphate + CoA + H(+). It carries out the reaction N-acetyl-alpha-D-glucosamine 1-phosphate + UTP + H(+) = UDP-N-acetyl-alpha-D-glucosamine + diphosphate. It functions in the pathway nucleotide-sugar biosynthesis; UDP-N-acetyl-alpha-D-glucosamine biosynthesis; N-acetyl-alpha-D-glucosamine 1-phosphate from alpha-D-glucosamine 6-phosphate (route II): step 2/2. The protein operates within nucleotide-sugar biosynthesis; UDP-N-acetyl-alpha-D-glucosamine biosynthesis; UDP-N-acetyl-alpha-D-glucosamine from N-acetyl-alpha-D-glucosamine 1-phosphate: step 1/1. It participates in bacterial outer membrane biogenesis; LPS lipid A biosynthesis. Functionally, catalyzes the last two sequential reactions in the de novo biosynthetic pathway for UDP-N-acetylglucosamine (UDP-GlcNAc). The C-terminal domain catalyzes the transfer of acetyl group from acetyl coenzyme A to glucosamine-1-phosphate (GlcN-1-P) to produce N-acetylglucosamine-1-phosphate (GlcNAc-1-P), which is converted into UDP-GlcNAc by the transfer of uridine 5-monophosphate (from uridine 5-triphosphate), a reaction catalyzed by the N-terminal domain. This is Bifunctional protein GlmU from Psychrobacter sp. (strain PRwf-1).